We begin with the raw amino-acid sequence, 415 residues long: Tyrosine--tRNA ligase (415 aa).

Residues 54–63 (PTGSNIHLGH) carry the 'HIGH' region motif. The 'KMSKS' region signature appears at 248-252 (KMSKT). Lys-251 is an ATP binding site. In terms of domain architecture, S4 RNA-binding spans 351–415 (AKAFYLMSAV…GKKTFRRLTA (65 aa)).

Belongs to the class-I aminoacyl-tRNA synthetase family. TyrS type 2 subfamily. In terms of assembly, homodimer.

Its subcellular location is the cytoplasm. It carries out the reaction tRNA(Tyr) + L-tyrosine + ATP = L-tyrosyl-tRNA(Tyr) + AMP + diphosphate + H(+). In terms of biological role, catalyzes the attachment of tyrosine to tRNA(Tyr) in a two-step reaction: tyrosine is first activated by ATP to form Tyr-AMP and then transferred to the acceptor end of tRNA(Tyr). The protein is Tyrosine--tRNA ligase of Synechococcus sp. (strain CC9902).